Here is a 708-residue protein sequence, read N- to C-terminus: Radial spoke head protein 6 homolog A (708 aa).

4 disordered regions span residues 1-94 (MGEP…GYTP), 376-407 (ETHG…IIPK), 495-514 (EEEG…FEEN), and 663-708 (GPEI…DLED). Over residues 10–32 (PSQTRRASQGSERARSQEYSQPL) the composition is skewed to polar residues. Residues 47–56 (RGSRSSQGSQ) are compositionally biased toward low complexity. Residues 495–504 (EEEGDEEEEG) are compositionally biased toward acidic residues. Positions 680–690 (LKAAQEQALAA) are enriched in low complexity. A compositionally biased stretch (acidic residues) spans 691-708 (AEEEEEDEEEEEDEDLED).

This sequence belongs to the flagellar radial spoke RSP4/6 family. In terms of assembly, component of the axonemal radial spoke 1 (RS1) and 2 (RS2) complexes, at least composed of spoke head proteins RSPH1, RSPH3, RSPH9 and the cilia-specific component RSPH4A or sperm-specific component RSPH6A, spoke stalk proteins RSPH14, DNAJB13, DYDC1, ROPN1L and NME5, and the RS1 complex-specific anchor protein IQUB. Interacts with RSPH1. Interacts with RSPH3B. Interacts with RSPH4A. Interacts with RSPH9. Interacts with RSPH10B. Post-translationally, phosphorylated by PKA. Phosphorylation increases in capacitated sperm. As to expression, expressed in sperm and testis (at protein level).

The protein resides in the cytoplasm. It localises to the cytoskeleton. Its subcellular location is the flagellum axoneme. Its function is as follows. Functions as part of radial spoke complexes in the axoneme of sperm flagella that play an important part in motility. The triple radial spokes (RS1, RS2 and RS3) are required to modulate beating of the sperm flagellum. This Mus musculus (Mouse) protein is Radial spoke head protein 6 homolog A.